Consider the following 86-residue polypeptide: RNA-binding protein Hfq (86 aa).

The Sm domain maps to 12–73 (DIFLNQVRKE…ISTISPQKPV (62 aa)).

Belongs to the Hfq family. In terms of assembly, homohexamer.

Its function is as follows. RNA chaperone that binds small regulatory RNA (sRNAs) and mRNAs to facilitate mRNA translational regulation in response to envelope stress, environmental stress and changes in metabolite concentrations. Also binds with high specificity to tRNAs. The chain is RNA-binding protein Hfq from Caldanaerobacter subterraneus subsp. tengcongensis (strain DSM 15242 / JCM 11007 / NBRC 100824 / MB4) (Thermoanaerobacter tengcongensis).